Reading from the N-terminus, the 357-residue chain is tRNA N6-adenosine threonylcarbamoyltransferase (357 aa).

Residues His-116 and His-120 each contribute to the Fe cation site. Substrate contacts are provided by residues 139–143, Asp-172, Gly-185, and Asn-284; that span reads LVSGG. Asp-312 provides a ligand contact to Fe cation.

The protein belongs to the KAE1 / TsaD family. Requires Fe(2+) as cofactor.

It localises to the cytoplasm. The catalysed reaction is L-threonylcarbamoyladenylate + adenosine(37) in tRNA = N(6)-L-threonylcarbamoyladenosine(37) in tRNA + AMP + H(+). Its function is as follows. Required for the formation of a threonylcarbamoyl group on adenosine at position 37 (t(6)A37) in tRNAs that read codons beginning with adenine. Is involved in the transfer of the threonylcarbamoyl moiety of threonylcarbamoyl-AMP (TC-AMP) to the N6 group of A37, together with TsaE and TsaB. TsaD likely plays a direct catalytic role in this reaction. This is tRNA N6-adenosine threonylcarbamoyltransferase from Synechococcus sp. (strain CC9902).